The chain runs to 86 residues: DNA-directed RNA polymerase subunit omega (86 aa).

Belongs to the RNA polymerase subunit omega family. As to quaternary structure, the RNAP catalytic core consists of 2 alpha, 1 beta, 1 beta' and 1 omega subunit. When a sigma factor is associated with the core the holoenzyme is formed, which can initiate transcription.

The catalysed reaction is RNA(n) + a ribonucleoside 5'-triphosphate = RNA(n+1) + diphosphate. In terms of biological role, promotes RNA polymerase assembly. Latches the N- and C-terminal regions of the beta' subunit thereby facilitating its interaction with the beta and alpha subunits. This chain is DNA-directed RNA polymerase subunit omega, found in Agathobacter rectalis (strain ATCC 33656 / DSM 3377 / JCM 17463 / KCTC 5835 / VPI 0990) (Eubacterium rectale).